The sequence spans 88 residues: Small ribosomal subunit protein bS20 (88 aa).

Belongs to the bacterial ribosomal protein bS20 family.

Its function is as follows. Binds directly to 16S ribosomal RNA. The polypeptide is Small ribosomal subunit protein bS20 (Micrococcus luteus (strain ATCC 4698 / DSM 20030 / JCM 1464 / CCM 169 / CCUG 5858 / IAM 1056 / NBRC 3333 / NCIMB 9278 / NCTC 2665 / VKM Ac-2230) (Micrococcus lysodeikticus)).